Here is a 188-residue protein sequence, read N- to C-terminus: Phosphatidylinositol N-acetylglucosaminyltransferase subunit H (188 aa).

Belongs to the PIGH family. In terms of assembly, component of the glycosylphosphatidylinositol-N-acetylglucosaminyltransferase (GPI-GnT) complex composed at least by PIGA, PIGC, PIGH, PIGP, PIGQ, PIGY and DPM2. Interacts with PIGQ.

Its subcellular location is the cytoplasm. Its pathway is glycolipid biosynthesis; glycosylphosphatidylinositol-anchor biosynthesis. In terms of biological role, part of the glycosylphosphatidylinositol-N-acetylglucosaminyltransferase (GPI-GnT) complex that catalyzes the transfer of N-acetylglucosamine from UDP-N-acetylglucosamine to phosphatidylinositol and participates in the first step of GPI biosynthesis. The protein is Phosphatidylinositol N-acetylglucosaminyltransferase subunit H of Mus musculus (Mouse).